The sequence spans 398 residues: uncharacterized protein (398 aa).

The helical transmembrane segment at 88–108 threads the bilayer; that stretch reads IGFTIGFAIFFILLFLLSNMV.

This sequence to B.megaterium SpoIV.

It localises to the cell membrane. This is an uncharacterized protein from Bacillus subtilis (strain 168).